Here is a 393-residue protein sequence, read N- to C-terminus: Protein TsgA (393 aa).

12 helical membrane passes run 11–31, 51–71, 78–98, 101–121, 134–154, 162–182, 206–226, 245–265, 273–293, 298–318, 332–352, and 361–381; these read WISFLSYALTGALVIVTGMVM, FLNAGILISIFLNAWLMEIVP, FGFILMILAVAGLMLSHSLAL, AAMFVLGLVSGITMSIGTFLI, LLFTDSFFSMAGMVFPMVAAF, WYWVYACIGLVYLAIFILTFG, IGVLFLAVAALCYILGQLGFI, ALVSDFWMSYMFGMWAFSFIL, ILTVLAGMATVLMYLFITGTQ, WFILTLGFFSSAIYTSIITLG, FILTCGTIGTMLTFVVTGPIV, and LLTANGLYAVVFVMCFALGFV.

Belongs to the major facilitator superfamily. TsgA family.

The protein localises to the cell inner membrane. This Salmonella arizonae (strain ATCC BAA-731 / CDC346-86 / RSK2980) protein is Protein TsgA.